A 192-amino-acid polypeptide reads, in one-letter code: uncharacterized protein (192 aa).

The Nudix hydrolase domain occupies 29–160 (HRQAAVLIPI…PLDIYRRGDS (132 aa)). Residues 67-89 (GAVDDTDASVIAAALREAEEEVA) carry the Nudix box motif. Mg(2+)-binding residues include Glu83 and Glu87.

The protein belongs to the Nudix hydrolase family. PCD1 subfamily. Requires Mn(2+) as cofactor. It depends on Mg(2+) as a cofactor.

Probably mediates the hydrolysis of some nucleoside diphosphate derivatives. This is an uncharacterized protein from Shigella boydii serotype 4 (strain Sb227).